Consider the following 533-residue polypeptide: Acetone monooxygenase (methyl acetate-forming) (533 aa).

Residues 43 to 46, 55 to 56, and Tyr61 each bind FAD; these read TWYW and DS. Position 53 to 55 (53 to 55) interacts with NADP(+); sequence RFD. NADP(+) contacts are provided by residues 183–189, 206–207, and Trp492; these read NGATGIQ and RT.

This sequence belongs to the FAD-binding monooxygenase family. In terms of assembly, homotetramer. FAD serves as cofactor.

It catalyses the reaction acetone + NADPH + O2 + H(+) = methyl acetate + NADP(+) + H2O. Plays an important role in the metabolism of acetone derived from propane oxidation. Catalyzes the oxidation of acetone to methyl acetate. Exhibits high catalytic efficiency towards various linear and cyclic ketones, such as butanone, 2-pentanone, 2-heptanone, 2-octanone, 2-nonanone, 2-decanone, cyclobutanone, cyclopentanone and cyclohexanone. Elicits the highest catalytic efficiency towards butanone and cyclobutanone. Is highly specific for NADPH and cannot use NADH. The sequence is that of Acetone monooxygenase (methyl acetate-forming) from Gordonia sp. (strain TY-5).